Here is an 80-residue protein sequence, read N- to C-terminus: Small ribosomal subunit protein bS16 (80 aa).

Belongs to the bacterial ribosomal protein bS16 family.

This Laribacter hongkongensis (strain HLHK9) protein is Small ribosomal subunit protein bS16.